Reading from the N-terminus, the 606-residue chain is Pickpocket protein 28 (606 aa).

The disordered stretch occupies residues 1–26 (MRTLTESRRRQSGSSGCKKDSESDDD). 2 consecutive transmembrane segments (helical) span residues 66-86 (IFFG…ISNV) and 490-510 (GLLG…FFYI).

This sequence belongs to the amiloride-sensitive sodium channel (TC 1.A.6) family. In terms of tissue distribution, expressed in water-sensing neurons in taste bristles on the proboscis but not in carbonation-sensing taste peg neurons (at protein level). Expressed in the tracheal system.

The protein localises to the cell membrane. Functionally, osmosensitive ion channel that mediates the cellular and behavioral response to water. Plays an essential role in gustatory water reception. Part of a complex that plays a role in tracheal liquid clearance. Probable role in sodium transport. This Drosophila melanogaster (Fruit fly) protein is Pickpocket protein 28 (ppk28).